Here is a 441-residue protein sequence, read N- to C-terminus: MSSYNSPHAYYPHDNTIINISGSDNTTNINTTTINSTSVDQDIHYYEDGTHYDRRNTHANCNNYNVGNGIGRNIIDNNRHESIRDCNESIRNVLQGRLNRSDNSCRLDVNSQILVGVGAPANSCGTNGDIYIDKCTRDYYTNRNRIWVFVGNLECREQIYGTGGCKGEKGIKGELGPKGNTGQKGDIGSKGDRGDKGEPTISMFSYINSYEQSVPGGFTSVVPSKATIAYISCVGGGGGGSSGSGNSGFHGGGAGGSVIKYPVSVVENQVIRGTVGAGGSGGQVGTLGMCGTDTVVTIGTLTITAKAGLSPTETSGGDGGTVIFAQGMFSPAIAKGGTLSSPSGSNGNVGFFAFSGAGGGFRGGNGGNILAFNGGKSQGPDTAGGGGASAFADGGSITIRGCVTASKGSGGGGAIQTGPVSISGVAGNGGNGYVRIDYYSQ.

The Collagen-like domain maps to 164 to 199; it reads GCKGEKGIKGELGPKGNTGQKGDIGSKGDRGDKGEP. The tract at residues 171–198 is disordered; it reads IKGELGPKGNTGQKGDIGSKGDRGDKGE. Over residues 187 to 198 the composition is skewed to basic and acidic residues; the sequence is IGSKGDRGDKGE.

This Acanthamoeba polyphaga (Amoeba) protein is Putative collagenous domain-containing protein R238.